The following is a 131-amino-acid chain: Pancreatic polypeptide prohormone (131 aa).

The N-terminal stretch at 1-29 (MAAAHRCLFLLLLSTCVALLLQPPLGALG) is a signal peptide. Y65 carries the post-translational modification Tyrosine amide.

The protein belongs to the NPY family.

Its subcellular location is the secreted. In terms of biological role, hormone secreted by pancreatic cells that acts as a regulator of pancreatic and gastrointestinal functions probably by signaling through the G protein-coupled receptor NPY4R2. This chain is Pancreatic polypeptide prohormone (PPY), found in Bos taurus (Bovine).